Reading from the N-terminus, the 380-residue chain is Putative S-(hydroxymethyl)glutathione dehydrogenase 2 (380 aa).

Position 50 (Cys-50) interacts with Zn(2+). His-51 serves as a coordination point for NAD(+). Zn(2+)-binding residues include His-72, Glu-73, Cys-102, Cys-105, Cys-108, Cys-116, and Cys-179. NAD(+) is bound by residues 204–209 (GLGSVG), Asp-228, and 297–299 (IGV).

Belongs to the zinc-containing alcohol dehydrogenase family. Class-III subfamily. Requires Zn(2+) as cofactor.

The enzyme catalyses a primary alcohol + NAD(+) = an aldehyde + NADH + H(+). The catalysed reaction is a secondary alcohol + NAD(+) = a ketone + NADH + H(+). It carries out the reaction S-(hydroxymethyl)glutathione + NADP(+) = S-formylglutathione + NADPH + H(+). It catalyses the reaction S-(hydroxymethyl)glutathione + NAD(+) = S-formylglutathione + NADH + H(+). The enzyme catalyses S-nitrosoglutathione + NADH + H(+) = S-(hydroxysulfenamide)glutathione + NAD(+). In terms of biological role, oxidizes long-chain alcohols and, in the presence of glutathione, is able to oxidize formaldehyde. Also acts as a S-nitroso-glutathione reductase by catalyzing the NADH-dependent reduction of S-nitrosoglutathione, thereby regulating protein S-nitrosylation. This is Putative S-(hydroxymethyl)glutathione dehydrogenase 2 from Schizosaccharomyces pombe (strain 972 / ATCC 24843) (Fission yeast).